Here is a 354-residue protein sequence, read N- to C-terminus: Glycine betaine/proline betaine transport system permease protein ProW (354 aa).

Residues Met-1–Ala-28 form a disordered region. The Cytoplasmic portion of the chain corresponds to Met-1 to Gln-99. Positions Asp-9–Ala-23 are enriched in low complexity. A helical transmembrane segment spans residues Leu-100–Val-120. Ser-121 is a topological domain (periplasmic). The chain crosses the membrane as a helical span at residues Gly-122–Trp-142. Residues Ser-143–Thr-148 are Cytoplasmic-facing. The ABC transmembrane type-1 domain occupies Ala-145–Thr-324. Residues Leu-149–Trp-169 traverse the membrane as a helical segment. Residues Leu-170–Pro-198 lie on the Periplasmic side of the membrane. Residues Ile-199 to Leu-219 form a helical membrane-spanning segment. At Pro-220–Gln-270 the chain is on the cytoplasmic side. Residues Thr-271–Gly-291 traverse the membrane as a helical segment. At Gln-292 to Arg-300 the chain is on the periplasmic side. A helical membrane pass occupies residues Leu-301–Asp-321. The Cytoplasmic portion of the chain corresponds to Arg-322–Lys-354.

It belongs to the binding-protein-dependent transport system permease family. CysTW subfamily. In terms of assembly, the complex is composed of two ATP-binding proteins (ProV), two transmembrane proteins (ProW) and a solute-binding protein (ProX).

It is found in the cell inner membrane. Functionally, part of the ProU ABC transporter complex involved in glycine betaine and proline betaine uptake. Probably responsible for the translocation of the substrate across the membrane. In Salmonella typhimurium (strain LT2 / SGSC1412 / ATCC 700720), this protein is Glycine betaine/proline betaine transport system permease protein ProW.